The following is a 286-amino-acid chain: ATP phosphoribosyltransferase (286 aa).

The protein belongs to the ATP phosphoribosyltransferase family. Long subfamily. It depends on Mg(2+) as a cofactor.

It is found in the cytoplasm. It carries out the reaction 1-(5-phospho-beta-D-ribosyl)-ATP + diphosphate = 5-phospho-alpha-D-ribose 1-diphosphate + ATP. It participates in amino-acid biosynthesis; L-histidine biosynthesis; L-histidine from 5-phospho-alpha-D-ribose 1-diphosphate: step 1/9. Its activity is regulated as follows. Feedback inhibited by histidine. Functionally, catalyzes the condensation of ATP and 5-phosphoribose 1-diphosphate to form N'-(5'-phosphoribosyl)-ATP (PR-ATP). Has a crucial role in the pathway because the rate of histidine biosynthesis seems to be controlled primarily by regulation of HisG enzymatic activity. In Paenarthrobacter aurescens (strain TC1), this protein is ATP phosphoribosyltransferase.